The primary structure comprises 95 residues: uncharacterized protein (95 aa).

This is an uncharacterized protein from Dictyostelium discoideum (Social amoeba).